Here is a 226-residue protein sequence, read N- to C-terminus: Uracil-DNA glycosylase (226 aa).

Catalysis depends on Asp68, which acts as the Proton acceptor.

It belongs to the uracil-DNA glycosylase (UDG) superfamily. UNG family.

The protein resides in the cytoplasm. The catalysed reaction is Hydrolyzes single-stranded DNA or mismatched double-stranded DNA and polynucleotides, releasing free uracil.. Functionally, excises uracil residues from the DNA which can arise as a result of misincorporation of dUMP residues by DNA polymerase or due to deamination of cytosine. The protein is Uracil-DNA glycosylase of Mycobacteroides abscessus (strain ATCC 19977 / DSM 44196 / CCUG 20993 / CIP 104536 / JCM 13569 / NCTC 13031 / TMC 1543 / L948) (Mycobacterium abscessus).